The primary structure comprises 119 residues: V-type proton ATPase subunit F (119 aa).

This sequence belongs to the V-ATPase F subunit family. In terms of assembly, V-ATPase is a heteromultimeric enzyme made up of two complexes: the ATP-hydrolytic V1 complex and the proton translocation V0 complex. The V1 complex consists of three catalytic AB heterodimers that form a heterohexamer, three peripheral stalks each consisting of EG heterodimers, one central rotor including subunits D and F, and the regulatory subunits C and H. The proton translocation complex V0 consists of the proton transport subunit a, a ring of proteolipid subunits c9c'', rotary subunit d, subunits e and f, and the accessory subunits ATP6AP1/Ac45 and ATP6AP2/PRR. Expressed in brain (at protein level).

The protein resides in the cytoplasmic vesicle. Its subcellular location is the secretory vesicle. The protein localises to the synaptic vesicle membrane. It localises to the clathrin-coated vesicle membrane. Its function is as follows. Subunit of the V1 complex of vacuolar(H+)-ATPase (V-ATPase), a multisubunit enzyme composed of a peripheral complex (V1) that hydrolyzes ATP and a membrane integral complex (V0) that translocates protons. V-ATPase is responsible for acidifying and maintaining the pH of intracellular compartments and in some cell types, is targeted to the plasma membrane, where it is responsible for acidifying the extracellular environment. In Bos taurus (Bovine), this protein is V-type proton ATPase subunit F (ATP6V1F).